Here is a 331-residue protein sequence, read N- to C-terminus: Holliday junction branch migration complex subunit RuvB (331 aa).

The large ATPase domain (RuvB-L) stretch occupies residues methionine 1 to tyrosine 178. ATP contacts are provided by residues leucine 17, arginine 18, glycine 59, lysine 62, threonine 63, threonine 64, glutamate 125 to tyrosine 127, arginine 168, tyrosine 178, and arginine 215. Residue threonine 63 participates in Mg(2+) binding. The small ATPAse domain (RuvB-S) stretch occupies residues threonine 179–glutamate 249. The tract at residues glutamine 252 to proline 331 is head domain (RuvB-H). DNA is bound by residues arginine 307 and arginine 312.

Belongs to the RuvB family. Homohexamer. Forms an RuvA(8)-RuvB(12)-Holliday junction (HJ) complex. HJ DNA is sandwiched between 2 RuvA tetramers; dsDNA enters through RuvA and exits via RuvB. An RuvB hexamer assembles on each DNA strand where it exits the tetramer. Each RuvB hexamer is contacted by two RuvA subunits (via domain III) on 2 adjacent RuvB subunits; this complex drives branch migration. In the full resolvosome a probable DNA-RuvA(4)-RuvB(12)-RuvC(2) complex forms which resolves the HJ.

The protein resides in the cytoplasm. The catalysed reaction is ATP + H2O = ADP + phosphate + H(+). Functionally, the RuvA-RuvB-RuvC complex processes Holliday junction (HJ) DNA during genetic recombination and DNA repair, while the RuvA-RuvB complex plays an important role in the rescue of blocked DNA replication forks via replication fork reversal (RFR). RuvA specifically binds to HJ cruciform DNA, conferring on it an open structure. The RuvB hexamer acts as an ATP-dependent pump, pulling dsDNA into and through the RuvAB complex. RuvB forms 2 homohexamers on either side of HJ DNA bound by 1 or 2 RuvA tetramers; 4 subunits per hexamer contact DNA at a time. Coordinated motions by a converter formed by DNA-disengaged RuvB subunits stimulates ATP hydrolysis and nucleotide exchange. Immobilization of the converter enables RuvB to convert the ATP-contained energy into a lever motion, pulling 2 nucleotides of DNA out of the RuvA tetramer per ATP hydrolyzed, thus driving DNA branch migration. The RuvB motors rotate together with the DNA substrate, which together with the progressing nucleotide cycle form the mechanistic basis for DNA recombination by continuous HJ branch migration. Branch migration allows RuvC to scan DNA until it finds its consensus sequence, where it cleaves and resolves cruciform DNA. The polypeptide is Holliday junction branch migration complex subunit RuvB (Neorickettsia sennetsu (strain ATCC VR-367 / Miyayama) (Ehrlichia sennetsu)).